The sequence spans 126 residues: Small ribosomal subunit protein uS12c (126 aa).

This sequence belongs to the universal ribosomal protein uS12 family. Part of the 30S ribosomal subunit.

It is found in the plastid. Its subcellular location is the chloroplast. Its function is as follows. With S4 and S5 plays an important role in translational accuracy. Located at the interface of the 30S and 50S subunits. In Trieres chinensis (Marine centric diatom), this protein is Small ribosomal subunit protein uS12c (rps12).